Reading from the N-terminus, the 70-residue chain is uncharacterized protein (70 aa).

Residues 12–32 (VLFMNFFSVFVCTIGTLFLVF) traverse the membrane as a helical segment.

It is found in the membrane. This is an uncharacterized protein from Saccharomyces cerevisiae (strain ATCC 204508 / S288c) (Baker's yeast).